Consider the following 95-residue polypeptide: Aspartyl/glutamyl-tRNA(Asn/Gln) amidotransferase subunit C (95 aa).

This sequence belongs to the GatC family. As to quaternary structure, heterotrimer of A, B and C subunits.

The catalysed reaction is L-glutamyl-tRNA(Gln) + L-glutamine + ATP + H2O = L-glutaminyl-tRNA(Gln) + L-glutamate + ADP + phosphate + H(+). It carries out the reaction L-aspartyl-tRNA(Asn) + L-glutamine + ATP + H2O = L-asparaginyl-tRNA(Asn) + L-glutamate + ADP + phosphate + 2 H(+). Its function is as follows. Allows the formation of correctly charged Asn-tRNA(Asn) or Gln-tRNA(Gln) through the transamidation of misacylated Asp-tRNA(Asn) or Glu-tRNA(Gln) in organisms which lack either or both of asparaginyl-tRNA or glutaminyl-tRNA synthetases. The reaction takes place in the presence of glutamine and ATP through an activated phospho-Asp-tRNA(Asn) or phospho-Glu-tRNA(Gln). The polypeptide is Aspartyl/glutamyl-tRNA(Asn/Gln) amidotransferase subunit C (Rhodopseudomonas palustris (strain TIE-1)).